The following is a 359-amino-acid chain: ELAV-like protein 2 (359 aa).

Positions 1 to 33 (METQLSNGPTCNNTANGPTTINNNCSSPVDSGN) are disordered. RRM domains lie at 39–117 (TNLI…YARP) and 125–205 (ANLY…FANN). Serine 221 is modified (phosphoserine). The 79-residue stretch at 276 to 354 (WCIFVYNLAP…RVLQVSFKTN (79 aa)) folds into the RRM 3 domain.

The protein belongs to the RRM elav family. In terms of assembly, interacts with IGF2BP1. Interacts with MAP1B light chain LC1.

RNA-binding protein that binds to the 3' untranslated region (3'UTR) of target mRNAs. Seems to recognize a GAAA motif. Can bind to its own 3'UTR, the FOS 3'UTR and the ID 3'UTR. This Pongo abelii (Sumatran orangutan) protein is ELAV-like protein 2 (ELAVL2).